We begin with the raw amino-acid sequence, 704 residues long: CAP-Gly domain-containing linker protein 4 (704 aa).

3 ANK repeats span residues 65-101, 149-180, and 186-215; these read TSVS…NVND, TNMN…DVDA, and NFGT…NPAF. A CAP-Gly 1 domain is found at 303–345; the sequence is GTTEFASGQWAGIELDEPEGKNNGSVGRVQYFKCAPKYGIFAP. The tract at residues 353–479 is disordered; the sequence is KDGRKTTTHT…SATSAANNSH (127 aa). Low complexity-rich tracts occupy residues 360–371, 423–432, and 440–461; these read THTPSTRATPHA, SMSSSSSSSS, and PKKL…SLPS. In terms of domain architecture, CAP-Gly 2 spans 504 to 546; that stretch reads GTTNFAPGYWYGIELEKPHGKNDGSVGGVQYFSCSPRYGIFAP. Phosphoserine occurs at positions 556 and 608. Positions 643–685 constitute a CAP-Gly 3 domain; the sequence is GPTDFASGIWLGLELRSAKGKNDGAVGDKRYFTCKPNYGVLVR.

The protein is CAP-Gly domain-containing linker protein 4 (Clip4) of Mus musculus (Mouse).